A 425-amino-acid chain; its full sequence is UDP-N-acetylglucosamine 1-carboxyvinyltransferase (425 aa).

22 to 23 (KN) contributes to the phosphoenolpyruvate binding site. Residue arginine 93 participates in UDP-N-acetyl-alpha-D-glucosamine binding. The active-site Proton donor is aspartate 117. Residues aspartate 312 and methionine 334 each coordinate UDP-N-acetyl-alpha-D-glucosamine.

Belongs to the EPSP synthase family. MurA subfamily.

It localises to the cytoplasm. The enzyme catalyses phosphoenolpyruvate + UDP-N-acetyl-alpha-D-glucosamine = UDP-N-acetyl-3-O-(1-carboxyvinyl)-alpha-D-glucosamine + phosphate. The protein operates within cell wall biogenesis; peptidoglycan biosynthesis. Cell wall formation. Adds enolpyruvyl to UDP-N-acetylglucosamine. This Treponema pallidum (strain Nichols) protein is UDP-N-acetylglucosamine 1-carboxyvinyltransferase.